Consider the following 102-residue polypeptide: Small ribosomal subunit protein uS10 (102 aa).

The disordered stretch occupies residues 34–58; that stretch reads VSGPVPLPTKTLEVPSRKSPDGEGT.

The protein belongs to the universal ribosomal protein uS10 family. Part of the 30S ribosomal subunit.

Its function is as follows. Involved in the binding of tRNA to the ribosomes. The protein is Small ribosomal subunit protein uS10 of Halobacterium salinarum (strain ATCC 29341 / DSM 671 / R1).